The chain runs to 593 residues: Proline dehydrogenase 1, mitochondrial (593 aa).

Positions 24-44 (PAAREQPAAGPGAEPVCGPAE) are disordered. An N6-acetyllysine mark is found at K368 and K479.

Belongs to the proline oxidase family. It depends on FAD as a cofactor.

It is found in the mitochondrion matrix. The enzyme catalyses L-proline + a quinone = (S)-1-pyrroline-5-carboxylate + a quinol + H(+). It participates in amino-acid degradation; L-proline degradation into L-glutamate; L-glutamate from L-proline: step 1/2. In terms of biological role, converts proline to delta-1-pyrroline-5-carboxylate. The sequence is that of Proline dehydrogenase 1, mitochondrial from Bos taurus (Bovine).